Here is a 205-residue protein sequence, read N- to C-terminus: Dephospho-CoA kinase (205 aa).

The DPCK domain occupies 6-205 (RIGLTGGIAA…EIYAGWCAGR (200 aa)). 14–19 (AAGKST) provides a ligand contact to ATP.

This sequence belongs to the CoaE family.

It is found in the cytoplasm. The catalysed reaction is 3'-dephospho-CoA + ATP = ADP + CoA + H(+). Its pathway is cofactor biosynthesis; coenzyme A biosynthesis; CoA from (R)-pantothenate: step 5/5. Catalyzes the phosphorylation of the 3'-hydroxyl group of dephosphocoenzyme A to form coenzyme A. The sequence is that of Dephospho-CoA kinase from Bifidobacterium longum (strain NCC 2705).